The sequence spans 185 residues: Ribosome-recycling factor (185 aa).

It belongs to the RRF family.

The protein localises to the cytoplasm. In terms of biological role, responsible for the release of ribosomes from messenger RNA at the termination of protein biosynthesis. May increase the efficiency of translation by recycling ribosomes from one round of translation to another. The sequence is that of Ribosome-recycling factor from Geobacter sp. (strain M21).